A 220-amino-acid polypeptide reads, in one-letter code: Phosphopantothenoylcysteine decarboxylase (220 aa).

FMN is bound by residues 29–31 and 54–56; these read GSV and TKA. The active-site Proton donor is the H91. FMN is bound by residues 107–110 and A141; that span reads SANT. 3 residues coordinate N-[(R)-4-phosphopantothenoyl]-L-cysteine: N143, R173, and A175. C176 (proton donor) is an active-site residue. Position 184 (M184) interacts with N-[(R)-4-phosphopantothenoyl]-L-cysteine.

The protein belongs to the HFCD (homooligomeric flavin containing Cys decarboxylase) superfamily. As to quaternary structure, forms homotrimers. Interacts with HIP1. Interacts with HD1 in the dark. FMN serves as cofactor. In terms of tissue distribution, expressed in root meristem, shoot apical meristem (SAM), intercalary meristem, floral meristem, embryo and tip of the coleoptile before true leaf emergence.

It is found in the nucleus. The catalysed reaction is N-[(R)-4-phosphopantothenoyl]-L-cysteine + H(+) = (R)-4'-phosphopantetheine + CO2. It functions in the pathway cofactor biosynthesis; coenzyme A biosynthesis; CoA from (R)-pantothenate: step 3/5. Catalyzes the decarboxylation of 4'-phosphopantothenoylcysteine to 4'-phosphopantetheine, a key step in coenzyme A biosynthesis. Involved in salt and osmotic tolerance, and light-regulated plant growth. Trimerization of HAL3 recruits and activates the E3 ubiquitin-protein ligase HIP1, which leads to the degradation of cell cycle suppressors, resulting in enhancement of cell division and plant growth. HAL3 function in cell division seems to be independent from its PPC decarboxylase activity. Acts as a positive regulator of flowering by binding to HD1 in the dark. The protein is Phosphopantothenoylcysteine decarboxylase of Oryza sativa subsp. japonica (Rice).